Consider the following 777-residue polypeptide: DISP complex protein LRCH3 (777 aa).

LRR repeat units follow at residues 56–79 (AAVT…AANH), 81–104 (LTDT…ACHF), 105–127 (VSLE…ILNL), 128–150 (QALT…LCNL), 152–172 (LKVL…IGHL), 173–195 (RHLM…IGNL), 196–218 (EALR…LAEL), 220–239 (LIRL…CYRN), 240–264 (LRHL…CIKG), and 266–290 (VHIF…DRRP). A mediates interaction with DOCK7 region spans residues 56–290 (AAVTGVLSLS…PDLPDYDRRP (235 aa)). A phosphoserine mark is found at Ser-324, Ser-415, and Ser-419. The tract at residues 382 to 648 (TAEEEEAEVR…DSTDSITGQN (267 aa)) is mediates direct interaction with MYO6. Positions 568-590 (FTPLKSDDRPNALLSSPATETVH) are disordered. Phosphoserine is present on residues Ser-611 and Ser-628. The interval 621 to 653 (ETNKGHASPLPPSAAPTTDSTDSITGQNSRQRE) is disordered. Residues 635–645 (APTTDSTDSIT) show a composition bias toward low complexity. The region spanning 652-765 (REEELELIDQ…VTVQALLELA (114 aa)) is the Calponin-homology (CH) domain.

In terms of assembly, component of the DOCK7-induced septin displacement/DISP complex, at least composed of DOCK7, LRCH3 and MYO6.

It is found in the cytoplasm. Functionally, as part of the DISP complex, may regulate the association of septins with actin and thereby regulate the actin cytoskeleton. The chain is DISP complex protein LRCH3 from Homo sapiens (Human).